Consider the following 102-residue polypeptide: Protein translation factor SUI1 homolog (102 aa).

Belongs to the SUI1 family.

This is Protein translation factor SUI1 homolog from Methanosarcina mazei (strain ATCC BAA-159 / DSM 3647 / Goe1 / Go1 / JCM 11833 / OCM 88) (Methanosarcina frisia).